The following is a 354-amino-acid chain: Selenide, water dikinase (354 aa).

Residue Cys-23 is part of the active site. ATP contacts are provided by residues Lys-26 and 54–56 (TSD). Asp-57 is a binding site for Mg(2+). Residues Asp-74, Asp-97, and 145–147 (GHS) each bind ATP. A Mg(2+)-binding site is contributed by Asp-97. Asp-233 is a binding site for Mg(2+).

It belongs to the selenophosphate synthase 1 family. Class I subfamily. Homodimer. Mg(2+) serves as cofactor.

It catalyses the reaction hydrogenselenide + ATP + H2O = selenophosphate + AMP + phosphate + 2 H(+). In terms of biological role, synthesizes selenophosphate from selenide and ATP. This chain is Selenide, water dikinase, found in Burkholderia cenocepacia (strain ATCC BAA-245 / DSM 16553 / LMG 16656 / NCTC 13227 / J2315 / CF5610) (Burkholderia cepacia (strain J2315)).